A 438-amino-acid polypeptide reads, in one-letter code: MEYFKNVPKVQYEGPKSNNPYAFKFYNPDEIIDGKPLKEHLRFAVAYWHTFTGTGTDPFGASTMQRPWDRFSDPMDIAKARVEAAFEFFEKLDVPFFCFHDRDIAPEGDNLRETNKNLGTIVAMIKDYLKTSKAKVLWGTANLFSHPRYVHGAATSCNADVFAYAAAQVKKALEITKELGGQNYVFWGGREGYETLLNTDTELELDNLARFLHMAVEYAKEIGFEGQLLIEPKPKEPTKHQYDFDAAHVYAFLKKYGLDKYFKLNIEVNHATLAGHEFQHELRYARINNILGSIDANMRDMLLGWDTDQFPTDIRMTTLAMYEVIKMGGFDKGGLNFDAKVRRASFEPEDLFIAHIAGMDAFAKGFKVAYRLVKDGVFDKFIEERYKSYKEGIGAEIVSGRANFKTLEEYALNNPKIENKSGKQELLESILNQYLFTE.

Residues His-100 and Asp-103 contribute to the active site. Residues Glu-231, Glu-267, His-270, Asp-295, Asp-306, Asp-308, and Asp-338 each coordinate Mg(2+).

Belongs to the xylose isomerase family. As to quaternary structure, homotetramer. Requires Mg(2+) as cofactor.

It is found in the cytoplasm. It catalyses the reaction alpha-D-xylose = alpha-D-xylulofuranose. This chain is Xylose isomerase, found in Caldanaerobacter subterraneus subsp. yonseiensis (Thermoanaerobacter yonseiensis).